A 551-amino-acid polypeptide reads, in one-letter code: Probable CoA ligase CCL5 (551 aa).

ATP is bound by residues Ser-204–Lys-212, Gln-345–Thr-350, Asp-431, Val-443–Arg-446, and Lys-537. The interval Glu-274–Gln-345 is SBD1. An SBD2 region spans residues Gly-346–Tyr-410.

This sequence belongs to the ATP-dependent AMP-binding enzyme family. In terms of tissue distribution, mostly expressed at low levels in glandular trichomes (lupulin glands) after flowering, and, to a lower extent, in stems, leaves, cones and flowers.

Its subcellular location is the cytoplasm. It is found in the cytosol. This Humulus lupulus (European hop) protein is Probable CoA ligase CCL5.